A 296-amino-acid chain; its full sequence is Low affinity immunoglobulin gamma Fc region receptor II (296 aa).

The signal sequence occupies residues 1–42 (MGIPSFLAFPAARRNRAHCTPWHPWGHMLLWTALLFLAPVSG). Residues 43-225 (KPDLPKAVVT…SSSSGPSSMT (183 aa)) are Extracellular-facing. Ig-like C2-type domains follow at residues 47–129 (PKAV…DVIS) and 130–212 (DWLL…VNIT). Intrachain disulfides connect Cys-70-Cys-112 and Cys-151-Cys-195. Residues Asn-79, Asn-86, Asn-105, Asn-179, Asn-186, and Asn-210 are each glycosylated (N-linked (GlcNAc...) asparagine). Residues 226–246 (AVAIGTCFAAVAIVAAIITWF) traverse the membrane as a helical segment. Residues 247-296 (RLRRKPISAGLTDAENDAARTEAENTVTYSLLSHPDVAEEDSESDYQKRL) lie on the Cytoplasmic side of the membrane. Positions 273–278 (VTYSLL) match the ITIM motif motif. A Phosphotyrosine; by SRC-type Tyr-kinases modification is found at Tyr-275. Ser-288 is subject to Phosphoserine. A Phosphotyrosine modification is found at Tyr-292.

In terms of assembly, interacts with FGR and LYN. Phosphorylated by SRC-type Tyr-kinases such as LYN, BLK, FYN and SYK. Higher expression is found in macrophages than in neutrophils.

The protein resides in the cell membrane. Binds to the Fc region of immunoglobulins gamma. Low affinity receptor. This chain is Low affinity immunoglobulin gamma Fc region receptor II (FCGR2), found in Bos taurus (Bovine).